The following is a 351-amino-acid chain: Histidinol-phosphate aminotransferase (351 aa).

Position 209 is an N6-(pyridoxal phosphate)lysine (lysine 209).

This sequence belongs to the class-II pyridoxal-phosphate-dependent aminotransferase family. Histidinol-phosphate aminotransferase subfamily. Homodimer. It depends on pyridoxal 5'-phosphate as a cofactor.

The enzyme catalyses L-histidinol phosphate + 2-oxoglutarate = 3-(imidazol-4-yl)-2-oxopropyl phosphate + L-glutamate. The protein operates within amino-acid biosynthesis; L-histidine biosynthesis; L-histidine from 5-phospho-alpha-D-ribose 1-diphosphate: step 7/9. The protein is Histidinol-phosphate aminotransferase of Chromohalobacter salexigens (strain ATCC BAA-138 / DSM 3043 / CIP 106854 / NCIMB 13768 / 1H11).